The chain runs to 457 residues: Phosphoglucosamine mutase (457 aa).

Serine 103 acts as the Phosphoserine intermediate in catalysis. Residues serine 103, aspartate 245, aspartate 247, and aspartate 249 each contribute to the Mg(2+) site. Serine 103 is modified (phosphoserine).

The protein belongs to the phosphohexose mutase family. Requires Mg(2+) as cofactor. In terms of processing, activated by phosphorylation.

It carries out the reaction alpha-D-glucosamine 1-phosphate = D-glucosamine 6-phosphate. In terms of biological role, catalyzes the conversion of glucosamine-6-phosphate to glucosamine-1-phosphate. In Syntrophotalea carbinolica (strain DSM 2380 / NBRC 103641 / GraBd1) (Pelobacter carbinolicus), this protein is Phosphoglucosamine mutase.